The chain runs to 363 residues: Heme A synthase (363 aa).

Helical transmembrane passes span 21–41, 107–127, 138–158, 174–194, 207–227, 268–288, 301–321, and 323–343; these read ALVRGWLYVVLLVLFALVLVG, RLLARSVGLVFALPLLFFWVS, LVGILLLGGLQGAIGWWMVAS, HLTLAALIFTATMVVARGLAP, LAGFIVLLALIQIYLGGLVAG, FVHRLGAYTVFAVALWHMIAT, ATLLFVLVLVQASIGIGTLLM, and VPLHMALTHQGFALIVLGFAA. Position 270 (H270) interacts with heme. A heme-binding site is contributed by H331.

The protein belongs to the COX15/CtaA family. Type 2 subfamily. Interacts with CtaB. The cofactor is heme b.

Its subcellular location is the cell membrane. The catalysed reaction is Fe(II)-heme o + 2 A + H2O = Fe(II)-heme a + 2 AH2. Its pathway is porphyrin-containing compound metabolism; heme A biosynthesis; heme A from heme O: step 1/1. In terms of biological role, catalyzes the conversion of heme O to heme A by two successive hydroxylations of the methyl group at C8. The first hydroxylation forms heme I, the second hydroxylation results in an unstable dihydroxymethyl group, which spontaneously dehydrates, resulting in the formyl group of heme A. The chain is Heme A synthase from Mesorhizobium japonicum (strain LMG 29417 / CECT 9101 / MAFF 303099) (Mesorhizobium loti (strain MAFF 303099)).